A 501-amino-acid polypeptide reads, in one-letter code: MVLVVDYGSQYSRLITRRIRENEVYSEVVFPDDKVDLSKVDTVILSGGPRSVYEEDAPKLPEWFQEYKGPVLAICYGMQLIVKELGGEVRRGRGEYGRTLVELSRDPIFEGIPEKVHVWMSHGDEVVRLPEGFHPIAVSETGVIAAATDGKRFWLLQFHPEVHHTEYGDRMISNFLFNVCKLEKNWKIGDLVEEKIRHIKETIGNKKAILALSGGVDSSVAAVLVHRAIGKNLVCVFVDHGLLRKNEREEVERVFKEHFDMNLVVVDARKRFLEKLRGVTDPEKKRKIIGEEFIRVFEEEAKKHDVEFLVQGTIYSDVIESAASGKTTAKIKSHHNVGGLPEKMNLKLVEPLRDLFKDEVRKVGKYLGIPDRIINRHPFPGPGLAVRVLGEVTEEKLEILREADYIFIETLRKHDYYDKVWQAFAVLLPIKSVGVKGDARAYEYVVALRAVNSVEGMTADWSRIPHDILDEAARRITREVKGVGRVVYDITSKPPATIEWE.

The Glutamine amidotransferase type-1 domain maps to Met-1–Asn-185. The active-site Nucleophile is the Cys-75. Catalysis depends on residues His-159 and Glu-161. Residues Trp-186–Arg-376 enclose the GMPS ATP-PPase domain. ATP is bound at residue Ser-213–Ser-219.

As to quaternary structure, homodimer.

It catalyses the reaction XMP + L-glutamine + ATP + H2O = GMP + L-glutamate + AMP + diphosphate + 2 H(+). It functions in the pathway purine metabolism; GMP biosynthesis; GMP from XMP (L-Gln route): step 1/1. Catalyzes the synthesis of GMP from XMP. The protein is GMP synthase [glutamine-hydrolyzing] of Thermotoga petrophila (strain ATCC BAA-488 / DSM 13995 / JCM 10881 / RKU-1).